Here is a 280-residue protein sequence, read N- to C-terminus: Probable endonuclease 4 (280 aa).

The Zn(2+) site is built by H69, H109, E145, D179, H182, H216, D229, H231, and E261.

This sequence belongs to the AP endonuclease 2 family. Zn(2+) is required as a cofactor.

It carries out the reaction Endonucleolytic cleavage to 5'-phosphooligonucleotide end-products.. Its function is as follows. Endonuclease IV plays a role in DNA repair. It cleaves phosphodiester bonds at apurinic or apyrimidinic (AP) sites, generating a 3'-hydroxyl group and a 5'-terminal sugar phosphate. The sequence is that of Probable endonuclease 4 from Photorhabdus laumondii subsp. laumondii (strain DSM 15139 / CIP 105565 / TT01) (Photorhabdus luminescens subsp. laumondii).